Here is a 201-residue protein sequence, read N- to C-terminus: Glycerol-3-phosphate acyltransferase (201 aa).

The next 5 helical transmembrane spans lie at 5–25, 55–75, 88–108, 118–138, and 164–184; these read LLGA…FGVV, KMGV…ILVA, WVTA…WLGF, LGIF…GYAV, and TYGP…LIFL.

This sequence belongs to the PlsY family. In terms of assembly, probably interacts with PlsX.

The protein resides in the cell inner membrane. The enzyme catalyses an acyl phosphate + sn-glycerol 3-phosphate = a 1-acyl-sn-glycero-3-phosphate + phosphate. The protein operates within lipid metabolism; phospholipid metabolism. In terms of biological role, catalyzes the transfer of an acyl group from acyl-phosphate (acyl-PO(4)) to glycerol-3-phosphate (G3P) to form lysophosphatidic acid (LPA). This enzyme utilizes acyl-phosphate as fatty acyl donor, but not acyl-CoA or acyl-ACP. This Anaeromyxobacter sp. (strain K) protein is Glycerol-3-phosphate acyltransferase.